Here is a 185-residue protein sequence, read N- to C-terminus: Ribosome-recycling factor (185 aa).

The segment at 138-185 (ALKKQEKDGEITEDEERRLEKEVQKVTDESTKKIDQMADNKRKEIIQG) is disordered.

Belongs to the RRF family.

Its subcellular location is the cytoplasm. Functionally, responsible for the release of ribosomes from messenger RNA at the termination of protein biosynthesis. May increase the efficiency of translation by recycling ribosomes from one round of translation to another. The polypeptide is Ribosome-recycling factor (Lactobacillus delbrueckii subsp. bulgaricus (strain ATCC BAA-365 / Lb-18)).